A 245-amino-acid chain; its full sequence is MSDNERTIVVRVLKFDPQSAVNKPHFKEYQLKETPSMTLFIALNLIREHQDPDLSFDFVCRAGICGSCAMMVNGRPRLACKTLTSSFENGVITLMPMPSFTLIKDLSVNTGDWFSDMTKRVESWAHSKEEVDITKPEKRVEPDEAQEVFELDRCIECGCCIASCGTKLMRPNFIGAAGMNRAMRFMIDSHDERSDDDFYELVGDDDGVFGCMSLIACHDTCPKELPLQSSIATLRNRMLKVGKSR.

Positions 17–98 (PQSAVNKPHF…NGVITLMPMP (82 aa)) constitute a 2Fe-2S ferredoxin-type domain. Residues Cys60, Cys65, Cys68, and Cys80 each contribute to the [2Fe-2S] cluster site. In terms of domain architecture, 4Fe-4S ferredoxin-type spans 145 to 174 (AQEVFELDRCIECGCCIASCGTKLMRPNFI). Cys154, Cys157, and Cys160 together coordinate [4Fe-4S] cluster. [3Fe-4S] cluster-binding residues include Cys164, Cys211, and Cys217. Position 221 (Cys221) interacts with [4Fe-4S] cluster.

Belongs to the succinate dehydrogenase/fumarate reductase iron-sulfur protein family. As to quaternary structure, part of an enzyme complex containing three subunits: a flavoprotein (frdA), an iron-sulfur protein (frdB), and diheme cytochrome b (frdC). Requires [2Fe-2S] cluster as cofactor. The cofactor is [3Fe-4S] cluster. It depends on [4Fe-4S] cluster as a cofactor.

It catalyses the reaction a menaquinone + succinate = a menaquinol + fumarate. This chain is Fumarate reductase iron-sulfur subunit (frdB), found in Helicobacter pylori (strain J99 / ATCC 700824) (Campylobacter pylori J99).